The primary structure comprises 159 residues: Ribosomal RNA large subunit methyltransferase H (159 aa).

S-adenosyl-L-methionine is bound by residues Leu-76, Gly-108, and 127 to 132 (FGKMTL).

This sequence belongs to the RNA methyltransferase RlmH family. In terms of assembly, homodimer.

The protein localises to the cytoplasm. It catalyses the reaction pseudouridine(1915) in 23S rRNA + S-adenosyl-L-methionine = N(3)-methylpseudouridine(1915) in 23S rRNA + S-adenosyl-L-homocysteine + H(+). Functionally, specifically methylates the pseudouridine at position 1915 (m3Psi1915) in 23S rRNA. This chain is Ribosomal RNA large subunit methyltransferase H, found in Lysinibacillus sphaericus (strain C3-41).